The chain runs to 252 residues: 2-succinyl-6-hydroxy-2,4-cyclohexadiene-1-carboxylate synthase (252 aa).

It belongs to the AB hydrolase superfamily. MenH family. Monomer.

It catalyses the reaction 5-enolpyruvoyl-6-hydroxy-2-succinyl-cyclohex-3-ene-1-carboxylate = (1R,6R)-6-hydroxy-2-succinyl-cyclohexa-2,4-diene-1-carboxylate + pyruvate. It functions in the pathway quinol/quinone metabolism; 1,4-dihydroxy-2-naphthoate biosynthesis; 1,4-dihydroxy-2-naphthoate from chorismate: step 3/7. It participates in quinol/quinone metabolism; menaquinone biosynthesis. Its function is as follows. Catalyzes a proton abstraction reaction that results in 2,5-elimination of pyruvate from 2-succinyl-5-enolpyruvyl-6-hydroxy-3-cyclohexene-1-carboxylate (SEPHCHC) and the formation of 2-succinyl-6-hydroxy-2,4-cyclohexadiene-1-carboxylate (SHCHC). The polypeptide is 2-succinyl-6-hydroxy-2,4-cyclohexadiene-1-carboxylate synthase (Escherichia coli (strain K12 / MC4100 / BW2952)).